The following is a 793-amino-acid chain: Phenylalanine--tRNA ligase beta subunit (793 aa).

The region spanning 39–148 is the tRNA-binding domain; the sequence is AAPFKGVKAA…EGDFPGVDLH (110 aa). The B5 domain maps to 401-476; that stretch reads PPQATIILRK…RLYGYDRLPS (76 aa). Residues Asp454, Asp460, Glu463, and Glu464 each contribute to the Mg(2+) site. The region spanning 699-792 is the FDX-ACB domain; the sequence is SKFPAIRRDI…LVTELGAIIR (94 aa).

This sequence belongs to the phenylalanyl-tRNA synthetase beta subunit family. Type 1 subfamily. In terms of assembly, tetramer of two alpha and two beta subunits. The cofactor is Mg(2+).

It localises to the cytoplasm. It catalyses the reaction tRNA(Phe) + L-phenylalanine + ATP = L-phenylalanyl-tRNA(Phe) + AMP + diphosphate + H(+). This is Phenylalanine--tRNA ligase beta subunit from Nitrosococcus oceani (strain ATCC 19707 / BCRC 17464 / JCM 30415 / NCIMB 11848 / C-107).